Reading from the N-terminus, the 455-residue chain is Ribulose bisphosphate carboxylase large chain (455 aa).

Lysine 5 is subject to N6,N6,N6-trimethyllysine. Asparagine 114 and threonine 164 together coordinate substrate. Lysine 166 serves as the catalytic Proton acceptor. A substrate-binding site is contributed by lysine 168. The Mg(2+) site is built by lysine 192, aspartate 194, and glutamate 195. The residue at position 192 (lysine 192) is an N6-carboxylysine. Histidine 285 functions as the Proton acceptor in the catalytic mechanism. 3 residues coordinate substrate: arginine 286, histidine 318, and serine 370.

This sequence belongs to the RuBisCO large chain family. Type I subfamily. Heterohexadecamer of 8 large chains and 8 small chains; disulfide-linked. The disulfide link is formed within the large subunit homodimers. Mg(2+) serves as cofactor. In terms of processing, the disulfide bond which can form in the large chain dimeric partners within the hexadecamer appears to be associated with oxidative stress and protein turnover.

Its subcellular location is the plastid. It localises to the chloroplast. It catalyses the reaction 2 (2R)-3-phosphoglycerate + 2 H(+) = D-ribulose 1,5-bisphosphate + CO2 + H2O. It carries out the reaction D-ribulose 1,5-bisphosphate + O2 = 2-phosphoglycolate + (2R)-3-phosphoglycerate + 2 H(+). Its function is as follows. RuBisCO catalyzes two reactions: the carboxylation of D-ribulose 1,5-bisphosphate, the primary event in carbon dioxide fixation, as well as the oxidative fragmentation of the pentose substrate in the photorespiration process. Both reactions occur simultaneously and in competition at the same active site. This Lupinus luteus (European yellow lupine) protein is Ribulose bisphosphate carboxylase large chain.